Here is a 495-residue protein sequence, read N- to C-terminus: UDP-N-acetylmuramoyl-L-alanyl-D-glutamate--2,6-diaminopimelate ligase (495 aa).

UDP-N-acetyl-alpha-D-muramoyl-L-alanyl-D-glutamate contacts are provided by residues Leu-27, Ser-29, and 44–46; that span reads HKA. 116 to 122 serves as a coordination point for ATP; it reads GTNGKTT. UDP-N-acetyl-alpha-D-muramoyl-L-alanyl-D-glutamate-binding positions include Asn-157, 158–159, Ser-185, Gln-191, and Arg-193; that span reads TT. Lys-225 carries the N6-carboxylysine modification. Residues Arg-390, 414–417, Gly-465, and Glu-469 contribute to the meso-2,6-diaminopimelate site; that span reads DNPR. The Meso-diaminopimelate recognition motif motif lies at 414-417; sequence DNPR.

It belongs to the MurCDEF family. MurE subfamily. The cofactor is Mg(2+). Carboxylation is probably crucial for Mg(2+) binding and, consequently, for the gamma-phosphate positioning of ATP.

It localises to the cytoplasm. The enzyme catalyses UDP-N-acetyl-alpha-D-muramoyl-L-alanyl-D-glutamate + meso-2,6-diaminopimelate + ATP = UDP-N-acetyl-alpha-D-muramoyl-L-alanyl-gamma-D-glutamyl-meso-2,6-diaminopimelate + ADP + phosphate + H(+). Its pathway is cell wall biogenesis; peptidoglycan biosynthesis. Its function is as follows. Catalyzes the addition of meso-diaminopimelic acid to the nucleotide precursor UDP-N-acetylmuramoyl-L-alanyl-D-glutamate (UMAG) in the biosynthesis of bacterial cell-wall peptidoglycan. This Pectobacterium atrosepticum (strain SCRI 1043 / ATCC BAA-672) (Erwinia carotovora subsp. atroseptica) protein is UDP-N-acetylmuramoyl-L-alanyl-D-glutamate--2,6-diaminopimelate ligase.